A 726-amino-acid chain; its full sequence is MNPQQRIAAIGTDKELSDLLDFSAMFSPPVNSGKNRPTTLGSSQFTASGMDERTSQASWASGGQSSPSFESSRGFADSHYADHLSDSRLVSHEGLSPTPFMSSSIMGKSERPPFSGYGREPGVSGCQSNLRSDIQLASPGPVTTPGKSPTPFYSYTGPNPRRRPLQDSASMDPLQTKKVRKPPPGLPTSVYAPSPSSEDFNRDSPSYPSPKPPGSMFASTFFDGTHNSSDQWNLSNGISQPGYGGMLGGSSSHMPQSGNYSNLHSHDRLNYPPHSVSPTDINASLPPMSSFHRSSASTSPFVTASHTPPVNTTEGVMAAANRGNATGSSQTGDALGKALASIYSPDHTSSSFPSNPSTPVGSPSPLAVQAGAATAGTVVTASGPAGRAGTTQWTRATGQAPSSPSYENSLHSLKNRVHQQLHEHLQDAMSFLKDVCESRMEDRLDRLDDAIHVLRNHAVGSTAALSNDIHSLLGQAHNGPISAIGSSFPSSGLVTNRTAQMGSVHREESGSLNNNNHSALQASAAPTSSSELNHQADAFRAIAGVLASQVASPLGLKVENQDKDDMHDSHASDDLKSDDESDKRDMKQNRGSSRPSCELSCSSINEDEDLNPEQKAERERERRMANNARERLRVRDINEAFKELGRMCQLHLKSEKPQTKLLILHQAVAVILSLEQQVRERNLNPKAACLKRREEEKVSGVSGDPQQAHPAVHPGLTDTSNPMGHL.

Disordered stretches follow at residues 27–75 (SPPV…SRGF), 89–223 (LVSH…TFFD), 243–267 (YGGM…HSHD), 289–309 (SSFH…HTPP), 345–367 (PDHT…SPLA), 380–409 (TASG…YENS), 501–532 (MGSV…SSEL), 558–624 (VENQ…ERRM), and 694–726 (EEEK…MGHL). Positions 29–47 (PVNSGKNRPTTLGSSQFTA) are enriched in polar residues. The span at 55–74 (SQASWASGGQSSPSFESSRG) shows a compositional bias: low complexity. Polar residues-rich tracts occupy residues 145–157 (PGKS…SYTG), 249–263 (GSSS…YSNL), and 291–309 (FHRS…HTPP). Positions 348–359 (TSSSFPSNPSTP) are enriched in low complexity. 2 stretches are compositionally biased toward polar residues: residues 389–409 (GTTQ…YENS) and 510–532 (GSLN…SSEL). Residues 559-575 (ENQDKDDMHDSHASDDL) show a composition bias toward basic and acidic residues. Low complexity predominate over residues 592 to 603 (SSRPSCELSCSS). Over residues 612–624 (PEQKAERERERRM) the composition is skewed to basic and acidic residues. One can recognise a bHLH domain in the interval 621–674 (ERRMANNARERLRVRDINEAFKELGRMCQLHLKSEKPQTKLLILHQAVAVILSL). The segment at 676–699 (QQVRERNLNPKAACLKRREEEKVS) is class A specific domain. The segment covering 717–726 (TDTSNPMGHL) has biased composition (polar residues).

Efficient DNA binding requires dimerization with another bHLH protein.

It is found in the nucleus. Functionally, transcriptional regulator. Involved in the initiation of neuronal differentiation. Activates transcription by binding to the E box (5'-CANNTG-3'). May be involved in the functional network that regulates the development of the GnRH axis. In Danio rerio (Zebrafish), this protein is Transcription factor 12 (tcf12).